A 117-amino-acid chain; its full sequence is Large ribosomal subunit protein eL34 (117 aa).

Belongs to the eukaryotic ribosomal protein eL34 family. As to quaternary structure, component of the large ribosomal subunit.

Its subcellular location is the cytoplasm. The protein localises to the cytosol. It is found in the endoplasmic reticulum. Component of the large ribosomal subunit. The ribosome is a large ribonucleoprotein complex responsible for the synthesis of proteins in the cell. The protein is Large ribosomal subunit protein eL34 (rpl34) of Danio rerio (Zebrafish).